Consider the following 95-residue polypeptide: Histone-like DNA-binding protein (95 aa).

This sequence belongs to the bacterial histone-like protein family.

This chain is Histone-like DNA-binding protein, found in Rickettsia felis (strain ATCC VR-1525 / URRWXCal2) (Rickettsia azadi).